We begin with the raw amino-acid sequence, 255 residues long: Small ribosomal subunit protein eS4 (255 aa).

The S4 RNA-binding domain maps to 43 to 115; it reads IPLLILVRDV…PTRFFTLHPI (73 aa).

The protein belongs to the eukaryotic ribosomal protein eS4 family.

The protein is Small ribosomal subunit protein eS4 of Hyperthermus butylicus (strain DSM 5456 / JCM 9403 / PLM1-5).